The chain runs to 312 residues: Ribonuclease Z (312 aa).

Zn(2+) is bound by residues His61, His63, Asp65, His66, His148, Asp216, and His275. Catalysis depends on Asp65, which acts as the Proton acceptor.

This sequence belongs to the RNase Z family. In terms of assembly, homodimer. It depends on Zn(2+) as a cofactor.

The enzyme catalyses Endonucleolytic cleavage of RNA, removing extra 3' nucleotides from tRNA precursor, generating 3' termini of tRNAs. A 3'-hydroxy group is left at the tRNA terminus and a 5'-phosphoryl group is left at the trailer molecule.. Functionally, zinc phosphodiesterase, which displays some tRNA 3'-processing endonuclease activity. Probably involved in tRNA maturation, by removing a 3'-trailer from precursor tRNA. The polypeptide is Ribonuclease Z (Clostridium tetani (strain Massachusetts / E88)).